The chain runs to 229 residues: Interleukin-22 receptor subunit alpha-2 (229 aa).

The N-terminal stretch at 1–19 (MPKHCFLGLLIMLLTTATE) is a signal peptide. Fibronectin type-III domains follow at residues 28-127 (KPQK…TKLD) and 128-229 (PPVV…VQIP). Asparagine 54 carries N-linked (GlcNAc...) asparagine glycosylation. Disulfide bonds link cysteine 76-cysteine 84 and cysteine 204-cysteine 225.

Belongs to the type II cytokine receptor family.

The protein resides in the secreted. In terms of biological role, receptor for IL22. Binds to IL22, prevents interaction with the functional IL-22R complex and blocks the activity of IL22 (in vitro). May play an important role as an IL22 antagonist in the regulation of inflammatory responses. This is Interleukin-22 receptor subunit alpha-2 (Il22ra2) from Rattus norvegicus (Rat).